Here is a 339-residue protein sequence, read N- to C-terminus: T-cell surface glycoprotein CD1a (339 aa).

Residues 1 to 18 (MLFLQLPLLLVLLPGGDS) form the signal peptide. At 19 to 300 (EEGFQEPISF…IILYWEQHSS (282 aa)) the chain is on the extracellular side. 2 N-linked (GlcNAc...) asparagine glycosylation sites follow: asparagine 38 and asparagine 75. 91 to 95 (FFVRF) provides a ligand contact to a D-galactosylceramide. 2 disulfide bridges follow: cysteine 120–cysteine 184 and cysteine 224–cysteine 279. A glycan (N-linked (GlcNAc...) asparagine) is linked at asparagine 146. Positions 185 to 295 (PRFVLGLLDA…LGGQDIILYW (111 aa)) constitute an Ig-like domain. Residues 301–321 (VGWILLAVIVPLVLLTGLAFW) form a helical membrane-spanning segment. At 322 to 339 (HRKHWKHCDPSSALHRLE) the chain is on the cytoplasmic side.

As to quaternary structure, heterodimer with B2M (beta-2-microglobulin). Interacts with CD74.

It is found in the cell membrane. The protein localises to the membrane raft. Its subcellular location is the endosome membrane. Its function is as follows. Antigen-presenting protein that binds self and non-self lipid and glycolipid antigens and presents them to T-cell receptors on natural killer T-cells. The protein is T-cell surface glycoprotein CD1a (CD1A) of Sus scrofa (Pig).